The chain runs to 139 residues: Small ribosomal subunit protein uS12 (139 aa).

Positions 1-44 (MPTINQLVRKPRQSKITKSKSPALNKGYNSFKKSLTDVKSPQKR) are disordered. Basic residues predominate over residues 9–18 (RKPRQSKITK). Positions 19–39 (SKSPALNKGYNSFKKSLTDVK) are enriched in polar residues. The residue at position 102 (aspartate 102) is a 3-methylthioaspartic acid.

The protein belongs to the universal ribosomal protein uS12 family. As to quaternary structure, part of the 30S ribosomal subunit. Contacts proteins S8 and S17. May interact with IF1 in the 30S initiation complex.

Functionally, with S4 and S5 plays an important role in translational accuracy. Interacts with and stabilizes bases of the 16S rRNA that are involved in tRNA selection in the A site and with the mRNA backbone. Located at the interface of the 30S and 50S subunits, it traverses the body of the 30S subunit contacting proteins on the other side and probably holding the rRNA structure together. The combined cluster of proteins S8, S12 and S17 appears to hold together the shoulder and platform of the 30S subunit. In Lysinibacillus sphaericus (strain C3-41), this protein is Small ribosomal subunit protein uS12.